A 345-amino-acid chain; its full sequence is Putative RING-H2 finger protein ATL36 (345 aa).

The N-terminal stretch at 1–31 (MNIFTRYHLPRVVSGVILPLFLFHLLPYVTC) is a signal peptide. A helical transmembrane segment spans residues 50 to 70 (SIIAIVVLAIFISLGMVSCCL). The segment at 123-165 (CAICLSEFEDQETLRWMPPCSHTFHANCIDVWLSSWSTCPVCR) adopts an RING-type; atypical zinc-finger fold. Serine 264 is subject to Phosphoserine.

It belongs to the RING-type zinc finger family. ATL subfamily.

It localises to the membrane. The enzyme catalyses S-ubiquitinyl-[E2 ubiquitin-conjugating enzyme]-L-cysteine + [acceptor protein]-L-lysine = [E2 ubiquitin-conjugating enzyme]-L-cysteine + N(6)-ubiquitinyl-[acceptor protein]-L-lysine.. It functions in the pathway protein modification; protein ubiquitination. This is Putative RING-H2 finger protein ATL36 (ATL36) from Arabidopsis thaliana (Mouse-ear cress).